Reading from the N-terminus, the 244-residue chain is Glucosamine-6-phosphate deaminase (244 aa).

Asp-67 (proton acceptor; for enolization step) is an active-site residue. The active-site For ring-opening step is the Asn-136. His-138 (proton acceptor; for ring-opening step) is an active-site residue. Catalysis depends on Glu-143, which acts as the For ring-opening step.

Belongs to the glucosamine/galactosamine-6-phosphate isomerase family. NagB subfamily.

The enzyme catalyses alpha-D-glucosamine 6-phosphate + H2O = beta-D-fructose 6-phosphate + NH4(+). The protein operates within amino-sugar metabolism; N-acetylneuraminate degradation; D-fructose 6-phosphate from N-acetylneuraminate: step 5/5. In terms of biological role, catalyzes the reversible isomerization-deamination of glucosamine 6-phosphate (GlcN6P) to form fructose 6-phosphate (Fru6P) and ammonium ion. This Clostridium botulinum (strain ATCC 19397 / Type A) protein is Glucosamine-6-phosphate deaminase.